We begin with the raw amino-acid sequence, 342 residues long: Prenyl transferase ptmC (342 aa).

A helical membrane pass occupies residues 17–37; that stretch reads LSFLTLTVGALALIVVLYISI. Histidine 110 is a binding site for isopentenyl diphosphate. The Mg(2+) site is built by aspartate 117 and aspartate 121. Arginine 126 contacts dimethylallyl diphosphate. The N-linked (GlcNAc...) asparagine glycan is linked to asparagine 154. Positions 210, 211, 240, 247, and 257 each coordinate dimethylallyl diphosphate.

The protein belongs to the FPP/GGPP synthase family.

It localises to the membrane. It participates in secondary metabolite biosynthesis. Prenyl transferase; part of the gene cluster that mediates the biosynthesis of the indole diterpenes penitrems. The geranylgeranyl diphosphate (GGPP) synthase ptmG catalyzes the first step in penitrem biosynthesis via conversion of farnesyl pyrophosphate and isopentyl pyrophosphate into geranylgeranyl pyrophosphate (GGPP). Condensation of indole-3-glycerol phosphate with GGPP by the prenyl transferase ptmC then forms 3-geranylgeranylindole (3-GGI). Epoxidation by the FAD-dependent monooxygenase ptmM leads to a epoxidized-GGI that is substrate of the terpene cyclase ptmB for cyclization to yield paspaline. Paspaline is subsequently converted to 13-desoxypaxilline by the cytochrome P450 monooxygenase ptmP, the latter being then converted to paxilline by the cytochrome P450 monooxygenase ptmQ. Paxilline is converted to beta-paxitriol via C-10 ketoreduction by the short-chain dehydrogenase ptmH which can be monoprenylated at the C-20 by the indole diterpene prenyltransferase ptmD. A two-step elimination (acetylation and elimination) process performed by the O-acetyltransferase ptmV and ptmI leads to the production of the prenylated form of penijanthine. The FAD-linked oxidoreductase ptmO then converts the prenylated form of penijanthine into PC-M5 which is in turn transformed into PC-M4 by the aromatic dimethylallyltransferase ptmE. Five sequential oxidative transformations performed by the cytochrome P450 monooxygenases ptmK, ptmU, ptmL, ptmN and ptmJ yield the various penitrem compounds. PtmK, ptmU and ptmM are involved in the formation of the key bicyclic ring of penitrem C via the formation of the intermediates secopenitrem D and penitrem D. PtmL catalyzes the epoxidation of penitrem D and C to yield penitrem B and F, respectively. PtmJ catalyzes the last benzylic hydroxylation to convert penitrem B to prenitrem E and penitrem F to penitrem A. This Penicillium ochrochloron protein is Prenyl transferase ptmC.